Here is a 197-residue protein sequence, read N- to C-terminus: Nucleoid occlusion factor SlmA (197 aa).

In terms of domain architecture, HTH tetR-type spans 7–67 (INRREHILQC…GLIEFIEESL (61 aa)). Positions 30–49 (TTAKLAAEVGVSEAALYRHF) form a DNA-binding region, H-T-H motif. A coiled-coil region spans residues 109–136 (DALLGENERLRSRISQLFSKIETHLKQI).

Belongs to the nucleoid occlusion factor SlmA family. In terms of assembly, homodimer. Interacts with FtsZ.

It localises to the cytoplasm. Its subcellular location is the nucleoid. Required for nucleoid occlusion (NO) phenomenon, which prevents Z-ring formation and cell division over the nucleoid. Acts as a DNA-associated cell division inhibitor that binds simultaneously chromosomal DNA and FtsZ, and disrupts the assembly of FtsZ polymers. SlmA-DNA-binding sequences (SBS) are dispersed on non-Ter regions of the chromosome, preventing FtsZ polymerization at these regions. This is Nucleoid occlusion factor SlmA from Shewanella pealeana (strain ATCC 700345 / ANG-SQ1).